A 298-amino-acid polypeptide reads, in one-letter code: S-adenosyl-L-methionine-dependent methyltransferase dpfgK (298 aa).

This sequence belongs to the methyltransferase superfamily.

It participates in secondary metabolite biosynthesis; terpenoid biosynthesis. Its function is as follows. S-adenosyl-L-methionine-dependent methyltransferase; part of the gene cluster that mediates the biosynthesis of diterpenoid pyrones. The first step of the pathway is the synthesis of the alpha-pyrone moiety by the polyketide synthase dpfgA via condensation of one acetyl-CoA starter unit with 3 malonyl-CoA units and 2 methylations. The alpha-pyrone is then combined with geranylgeranyl pyrophosphate (GGPP) formed by the GGPP synthase dpfgD through the action of the prenyltransferase dpfgC to yield a linear alpha-pyrone diterpenoid. Subsequent steps in the diterpenoid pyrone biosynthetic pathway involve the decalin core formation, which is initiated by the epoxidation of the C10-C11 olefin by the FAD-dependent oxidoreductase dpfgE, and is followed by a cyclization cascade catalyzed by the terpene cyclase dpfgB. The short chain dehydrogenase/reductase dpfgG then oxidizes the 8S hydroxy group to a ketone and the short chain dehydrogenase/reductase dpfgH reduces the ketone to the 8R hydroxy group to yield higginsianin B. Higginsianin B is further methylated by the methyltransferase dpfgI to produce the intermediate named FDDP B. The cytochrome P450 monooxygenase dfgpJ then catalyzes a three-step oxidation at C-27 to generate a carboxylic acid as well as C-26 hydroxylation. Finally, methyltransferase dpfgK methylates the carboxylic acid generated by dpfgJ, yielding the final diterpenoid pyrones from the pathway which were named FDDP D and FDDP E. This chain is S-adenosyl-L-methionine-dependent methyltransferase dpfgK, found in Gibberella zeae (strain ATCC MYA-4620 / CBS 123657 / FGSC 9075 / NRRL 31084 / PH-1) (Wheat head blight fungus).